A 1066-amino-acid chain; its full sequence is Elongation factor 3 (1066 aa).

6 HEAT repeats span residues 112-149 (FIFENVLNSLVEAMGDKEKAVQKASLETLKAFVRVMSP), 151-188 (AAQQVLKVVLHQARTAGKWQVKTGCVALLEEMVTACPE), 192-229 (ALMPEIIPVMTEVIWDTKTDVQKASRAALTKLCALISN), 231-268 (DIERFIPALINSLIHPVEEVPKTIQLLSATTFVQEVDS), 269-306 (ATLALMVPLLSRGLNERPTATKRKVAVIIDNMTKLVDN), and 312-353 (PFLG…VTGD). ADP is bound at residue Thr-418. ABC transporter domains are found at residues 454-672 (EEGE…YAEL) and 699-1015 (IKMK…KKEE). Residues Asn-735, Glu-944, Asn-947, and His-973 each coordinate ADP. The disordered stretch occupies residues 997–1066 (GHDWTESNSK…YDSADELEDL (70 aa)). Basic residues predominate over residues 1042 to 1054 (RKAKKDRMARKKA).

It belongs to the ABC transporter superfamily. ABCF family. EF3 subfamily.

Its subcellular location is the cytoplasm. The protein resides in the cytosol. It carries out the reaction ATP + H2O = ADP + phosphate + H(+). Its pathway is protein biosynthesis; polypeptide chain elongation. Its function is as follows. Ribosome-dependent ATPase that functions in cytoplasmic translation elongation. Required for the ATP-dependent release of deacylated tRNA from the ribosomal E-site during protein biosynthesis. Stimulates the eEF1A-dependent binding of aminoacyl-tRNA to the ribosomal A-site, which has reduced affinity for tRNA as long as the E-site is occupied. Assists translation termination by stimulating the release of nascent protein from the ribosome by release factors. In Mycosarcoma maydis (Corn smut fungus), this protein is Elongation factor 3.